The primary structure comprises 2212 residues: Nonribosomal peptide synthetase ftmPS (2212 aa).

The segment at 74-473 is adenylation 1; the sequence is TYAELDSLSD…IEHHLQQTLP (400 aa). In terms of domain architecture, Carrier 1 spans 592–669; that stretch reads PPSTLKETTI…EQSQRAGLIQ (78 aa). Serine 629 carries the post-translational modification O-(pantetheine 4'-phosphoryl)serine. Residues 708–973 are condensation 1; the sequence is EDIYPCTALQ…IATVPLRIRV (266 aa). The interval 1167-1564 is adenylation 2; the sequence is TYRELWAHSS…LSAVEASLMR (398 aa). The Carrier 2 domain occupies 1678–1757; that stretch reads PMSDDNERRL…QFRHLITEDD (80 aa). The residue at position 1715 (serine 1715) is an O-(pantetheine 4'-phosphoryl)serine. Residues 1815-2070 form a condensation 2 region; sequence HFQFDLSGAI…CTNYIPYRLS (256 aa).

This sequence belongs to the NRP synthetase family.

It catalyses the reaction L-proline + L-tryptophan + 2 ATP = brevianamide F + 2 AMP + 2 diphosphate + 2 H(+). Its pathway is mycotoxin biosynthesis. Nonribosomal peptide synthetase; part of the gene cluster that mediates the biosynthesis of fumitremorgins, indole alkaloids that carry not only intriguing chemical structures, but also interesting biological and pharmacological activities. The biosynthesis of fumitremorgin-type alkaloids begins by condensation of the two amino acids L-tryptophan and L-proline to brevianamide F, catalyzed by the non-ribosomal peptide synthetase ftmPS/ftmA. Brevianamide F is then prenylated by the prenyltransferase ftmPT1/ftmB in the presence of dimethylallyl diphosphate, resulting in the formation of tryprostatin B. The three cytochrome P450 monooxygenases, ftmP450-1/ftmC, ftmP450-2/ftmE and ftmP450-3/FtmG, are responsible for the conversion of tryprostatin B to 6-hydroxytryprostatin B, tryprostatin A to fumitremorgin C and fumitremorgin C to 12,13-dihydroxyfumitremorgin C, respectively. The putative methyltransferase ftmMT/ftmD is expected for the conversion of 6-hydroxytryprostatin B to tryprostatin A. FtmPT2/FtmH catalyzes the prenylation of 12,13-dihydroxyfumitre-morgin C in the presence of dimethylallyl diphosphate, resulting in the formation of fumitremorgin B. Fumitremorgin B is further converted to verruculogen by ftmOx1/ftmF via the insertion of an endoperoxide bond between the two prenyl moieties. Finally, verruculogen is further converted to fumitremorgin A by the verruculogen prenyltransferase ftmPT3. The protein is Nonribosomal peptide synthetase ftmPS (ftmPS) of Neosartorya fischeri (strain ATCC 1020 / DSM 3700 / CBS 544.65 / FGSC A1164 / JCM 1740 / NRRL 181 / WB 181) (Aspergillus fischerianus).